The sequence spans 121 residues: RxLR effector protein PexRD2 (121 aa).

Residues 1-20 form the signal peptide; it reads MRLSYVIVVIATSFLVTTEA. The RxLR-dEER motif lies at 38-56; it reads RLLRKHYTAAENDDDSEAR. The segment at 57–121 is WY domain; sequence ALNTEKMKTM…LNYVAEHTAV (65 aa).

It belongs to the RxLR effector family. Homodimer. Interacts with host MAPKKK epsilon (via its kinase domain).

The protein localises to the secreted. The protein resides in the host cytoplasm. It is found in the host nucleus. Effector that enhances P.infestans colonization of Nicotiana benthamiana leaves. Induces a weak Cell death response in N.benthamiana. PexRD2-induced cell death is dependent on SGT1, suggesting that PexRD2 is recognized by the plant immune system. Interacts with the kinase domain of the host MAPKKK epsilon, a positive regulator of cell death associated with plant immunity, and perturbs signaling pathways triggered by MAPKKK epsilon. In Phytophthora infestans (strain T30-4) (Potato late blight agent), this protein is RxLR effector protein PexRD2.